Here is a 46-residue protein sequence, read N- to C-terminus: Esculentin-1SEa (46 aa).

Cysteine 40 and cysteine 46 form a disulfide bridge.

Expressed by the skin glands.

It is found in the secreted. Its function is as follows. Mast cell degranulating peptide. Causes histamine release from rat peritoneal mast cells in vitro. Has antibacterial activity against the Gram-negative bacterium E.coli K12 and Gram-positive bacterium M.luteus NCT C2665. The sequence is that of Esculentin-1SEa from Lithobates sevosus (Dusky gopher frog).